Consider the following 102-residue polypeptide: uncharacterized protein (102 aa).

Residues 7-23 traverse the membrane as a helical segment; it reads IVFVSCVILGLAACSSQ.

The protein resides in the membrane. This is an uncharacterized protein from Haemophilus influenzae (strain ATCC 51907 / DSM 11121 / KW20 / Rd).